The following is an 88-amino-acid chain: Large ribosomal subunit protein bL27 (88 aa).

Residues 1–25 (MAHKKGASSSSNGRDSEAKRLGVKR) are disordered.

Belongs to the bacterial ribosomal protein bL27 family.

The chain is Large ribosomal subunit protein bL27 from Corynebacterium diphtheriae (strain ATCC 700971 / NCTC 13129 / Biotype gravis).